Reading from the N-terminus, the 525-residue chain is Estrogen receptor (525 aa).

The interval 1–59 (PTSPLVFVPSSPRLSPFMHPPSHHYLETTSTPVYRSSVSSSQQQLSREDQCGTSDDSYS) is disordered. The interval 1–82 (PTSPLVFVPS…GFEMAKEMRF (82 aa)) is modulating. Low complexity predominate over residues 36–45 (SSVSSSQQQL). 2 NR C4-type zinc fingers span residues 83-103 (CAVC…CEGC) and 119-143 (CPAT…LRKC). Positions 83–148 (CAVCSDYASG…RLRKCYQVGM (66 aa)) form a DNA-binding region, nuclear receptor. A hinge region spans residues 149–209 (MKGGVRKDRG…GGGKSSIIGM (61 aa)). A compositionally biased stretch (basic and acidic residues) spans 154 to 182 (RKDRGRVLRRDKRRTGTSDKASKDLEHRT). Positions 154-203 (RKDRGRVLRRDKRRTGTSDKASKDLEHRTAPPQDRRKHSSSSSSAGGGGK) are disordered. The 237-residue stretch at 210 to 446 (SPDQVLLLLQ…DLLLEMLDAH (237 aa)) folds into the NR LBD domain. Basic and acidic residues predominate over residues 452-465 (DRPAESWSQADREP). The segment at 452 to 525 (DRPAESWSQA…GPRSDCTHIL (74 aa)) is disordered. Residues 479–493 (SGGGDGGPSSAGSGS) are compositionally biased toward gly residues.

This sequence belongs to the nuclear hormone receptor family. NR3 subfamily. As to quaternary structure, binds DNA as a homodimer. Can form a heterodimer with ER-beta. In terms of tissue distribution, abundant in the liver, less abundant in the testes and barely detectable in the ovary and brain.

Its subcellular location is the nucleus. In terms of biological role, the steroid hormones and their receptors are involved in the regulation of eukaryotic gene expression and affect cellular proliferation and differentiation in target tissues. This Micropogonias undulatus (Atlantic croaker) protein is Estrogen receptor (esr1).